A 191-amino-acid polypeptide reads, in one-letter code: Scytalone dehydratase PfmaJ (191 aa).

Y25, Y45, and F48 together coordinate substrate. Active-site residues include H80 and H105. N126 provides a ligand contact to substrate.

The protein belongs to the scytalone dehydratase family. Homotrimer. Each subunit contains an active site, located in the central part of the hydrophobic core of the monomer, which functions independently.

Its subcellular location is the endosome. It catalyses the reaction scytalone = 1,3,8-trihydroxynaphthalene + H2O. It functions in the pathway pigment biosynthesis; melanin biosynthesis. Functionally, scytalone dehydratase involved the biosynthesis of dihydroxynaphthalene (DHN)-melanin, a bluish-green pigment forming a dark layer in the conidial wall that protects the conidia from UV radiations. The first step of the pathway is the production of the pentaketide 1,3,6,8-tetrahydroxynaphthalene (1,3,6,8-THN or T4HN) by the polyketide synthase PfmaE though condensation of acetyl-CoA with malonyl-CoA. T4HN is not stable and easily oxidizes into the stable form flaviolin. T4HN is also substrate of the hydroxynaphthalene reductase PfmaG to yield scytalone. The scytalone dehydratase PfmaJ then reduces scytalone to 1,3,8-THN. 1,3,8-THN is then substrate of the hydroxynaphthalene reductase PfmaI to yield vermelone. Vermelone is further converted by the multicopper oxidase PfmaD to 1,8-DHN. Finally the laccase PFICI_06862 transforms 1,8-DHN to DHN-melanin. The roles of the 5-oxoprolinase PfmaA and the proline iminopeptidase PfmaB within the cluster have not been elucidated yet. The chain is Scytalone dehydratase PfmaJ from Pestalotiopsis fici (strain W106-1 / CGMCC3.15140).